A 217-amino-acid chain; its full sequence is GTPase IMAP family member GIMD1 (217 aa).

The AIG1-type G domain maps to 6 to 217 (KMIINLAVFG…ENHFQVLSLA (212 aa)). GTP contacts are provided by residues 15–23 (GRTQSGKSS), S36, and 148–150 (HAE).

It belongs to the TRAFAC class TrmE-Era-EngA-EngB-Septin-like GTPase superfamily. AIG1/Toc34/Toc159-like paraseptin GTPase family. IAN subfamily.

The protein is GTPase IMAP family member GIMD1 (Gimd1) of Mus musculus (Mouse).